A 336-amino-acid chain; its full sequence is tRNA (guanine(37)-N(1))-methyltransferase Trm5b (336 aa).

S-adenosyl-L-methionine is bound by residues arginine 186, 223 to 224 (DI), 251 to 252 (DV), and asparagine 265.

The protein belongs to the class I-like SAM-binding methyltransferase superfamily. TRM5/TYW2 family. As to quaternary structure, monomer.

It is found in the cytoplasm. It carries out the reaction guanosine(37) in tRNA + S-adenosyl-L-methionine = N(1)-methylguanosine(37) in tRNA + S-adenosyl-L-homocysteine + H(+). Functionally, specifically methylates the N1 position of guanosine-37 in various tRNAs. This Methanocaldococcus jannaschii (strain ATCC 43067 / DSM 2661 / JAL-1 / JCM 10045 / NBRC 100440) (Methanococcus jannaschii) protein is tRNA (guanine(37)-N(1))-methyltransferase Trm5b (trm5b).